The following is a 498-amino-acid chain: ATP synthase subunit beta, chloroplastic (498 aa).

172–179 (GGAGVGKT) is an ATP binding site.

It belongs to the ATPase alpha/beta chains family. As to quaternary structure, F-type ATPases have 2 components, CF(1) - the catalytic core - and CF(0) - the membrane proton channel. CF(1) has five subunits: alpha(3), beta(3), gamma(1), delta(1), epsilon(1). CF(0) has four main subunits: a(1), b(1), b'(1) and c(9-12).

The protein resides in the plastid. It localises to the chloroplast thylakoid membrane. The catalysed reaction is ATP + H2O + 4 H(+)(in) = ADP + phosphate + 5 H(+)(out). In terms of biological role, produces ATP from ADP in the presence of a proton gradient across the membrane. The catalytic sites are hosted primarily by the beta subunits. This chain is ATP synthase subunit beta, chloroplastic, found in Nicotiana tabacum (Common tobacco).